Consider the following 20-residue polypeptide: Phylloseptin-O1 (20 aa).

At Gly20 the chain carries Glycine amide.

In terms of tissue distribution, expressed by the skin glands.

It is found in the secreted. In terms of biological role, has antiprotozoal activity against T.cruzi. The sequence is that of Phylloseptin-O1 (psn4) from Pithecopus oreades (Orange-legged leaf frog).